The sequence spans 201 residues: Small ribosomal subunit protein uS4 (201 aa).

The tract at residues 27–47 (SKKNYPPGQHGNSRKRKTSEY) is disordered. The region spanning 92 to 152 (GRLDNVVYRL…EKSKSMEVIA (61 aa)) is the S4 RNA-binding domain.

This sequence belongs to the universal ribosomal protein uS4 family. In terms of assembly, part of the 30S ribosomal subunit. Contacts protein S5. The interaction surface between S4 and S5 is involved in control of translational fidelity.

Functionally, one of the primary rRNA binding proteins, it binds directly to 16S rRNA where it nucleates assembly of the body of the 30S subunit. Its function is as follows. With S5 and S12 plays an important role in translational accuracy. In Parabacteroides distasonis (strain ATCC 8503 / DSM 20701 / CIP 104284 / JCM 5825 / NCTC 11152), this protein is Small ribosomal subunit protein uS4.